Reading from the N-terminus, the 418-residue chain is eIF5-mimic protein 2-B (418 aa).

Polar residues predominate over residues 1 to 15 (MSYQKQQKPTLTGQR). Residues 1 to 29 (MSYQKQQKPTLTGQRFKTRKRDEKERFDP) form a disordered region. One can recognise a W2 domain in the interval 247–414 (NQQSLGARKE…KNAEEESESE (168 aa)).

Belongs to the BZW family.

Functionally, translation initiation regulator which may repress repeat-associated non-AUG (RAN) initiated translation probably by acting as a competitive inhibitor of eukaryotic translation initiation factor 5 (EIF5) function. Enhances histone H4 gene transcription but does not seem to bind DNA directly. The chain is eIF5-mimic protein 2-B (bzw1b) from Danio rerio (Zebrafish).